Here is a 264-residue protein sequence, read N- to C-terminus: S-adenosylmethionine decarboxylase proenzyme (264 aa).

Serine 112 serves as the catalytic Schiff-base intermediate with substrate; via pyruvic acid. Position 112 is a pyruvic acid (Ser); by autocatalysis (serine 112). The Proton acceptor; for processing activity role is filled by histidine 117. Cysteine 140 serves as the catalytic Proton donor; for catalytic activity.

This sequence belongs to the prokaryotic AdoMetDC family. Type 2 subfamily. In terms of assembly, heterooctamer of four alpha and four beta chains arranged as a tetramer of alpha/beta heterodimers. The cofactor is pyruvate. Post-translationally, is synthesized initially as an inactive proenzyme. Formation of the active enzyme involves a self-maturation process in which the active site pyruvoyl group is generated from an internal serine residue via an autocatalytic post-translational modification. Two non-identical subunits are generated from the proenzyme in this reaction, and the pyruvate is formed at the N-terminus of the alpha chain, which is derived from the carboxyl end of the proenzyme. The post-translation cleavage follows an unusual pathway, termed non-hydrolytic serinolysis, in which the side chain hydroxyl group of the serine supplies its oxygen atom to form the C-terminus of the beta chain, while the remainder of the serine residue undergoes an oxidative deamination to produce ammonia and the pyruvoyl group blocking the N-terminus of the alpha chain.

It carries out the reaction S-adenosyl-L-methionine + H(+) = S-adenosyl 3-(methylsulfanyl)propylamine + CO2. It functions in the pathway amine and polyamine biosynthesis; S-adenosylmethioninamine biosynthesis; S-adenosylmethioninamine from S-adenosyl-L-methionine: step 1/1. Its function is as follows. Catalyzes the decarboxylation of S-adenosylmethionine to S-adenosylmethioninamine (dcAdoMet), the propylamine donor required for the synthesis of the polyamines spermine and spermidine from the diamine putrescine. The polypeptide is S-adenosylmethionine decarboxylase proenzyme (Shigella dysenteriae serotype 1 (strain Sd197)).